Reading from the N-terminus, the 369-residue chain is Type 2 DNA topoisomerase 6 subunit A (369 aa).

One can recognise a Topo IIA-type catalytic domain in the interval 11 to 149; the sequence is KGDALAREKL…FHMRPEEDGA (139 aa). Residue tyrosine 106 is the O-(5'-phospho-DNA)-tyrosine intermediate of the active site. Residues glutamate 202 and aspartate 254 each coordinate Mg(2+).

This sequence belongs to the TOP6A family. Homodimer. Heterotetramer of two Top6A and two Top6B chains. It depends on Mg(2+) as a cofactor.

The catalysed reaction is ATP-dependent breakage, passage and rejoining of double-stranded DNA.. In terms of biological role, relaxes both positive and negative superturns and exhibits a strong decatenase activity. This is Type 2 DNA topoisomerase 6 subunit A from Methanosarcina mazei (strain ATCC BAA-159 / DSM 3647 / Goe1 / Go1 / JCM 11833 / OCM 88) (Methanosarcina frisia).